The sequence spans 333 residues: Ferredoxin--NADP reductase (333 aa).

FAD contacts are provided by Asp-32, Gln-40, Tyr-45, Ala-85, Phe-119, Asp-285, and Thr-326.

The protein belongs to the ferredoxin--NADP reductase type 2 family. As to quaternary structure, homodimer. It depends on FAD as a cofactor.

The enzyme catalyses 2 reduced [2Fe-2S]-[ferredoxin] + NADP(+) + H(+) = 2 oxidized [2Fe-2S]-[ferredoxin] + NADPH. This is Ferredoxin--NADP reductase from Neorickettsia sennetsu (strain ATCC VR-367 / Miyayama) (Ehrlichia sennetsu).